The primary structure comprises 875 residues: Alanine--tRNA ligase (875 aa).

4 residues coordinate Zn(2+): histidine 564, histidine 568, cysteine 666, and histidine 670.

Belongs to the class-II aminoacyl-tRNA synthetase family. As to quaternary structure, homotetramer. Requires Zn(2+) as cofactor.

The protein localises to the cytoplasm. It catalyses the reaction tRNA(Ala) + L-alanine + ATP = L-alanyl-tRNA(Ala) + AMP + diphosphate. In terms of biological role, catalyzes the attachment of alanine to tRNA(Ala) in a two-step reaction: alanine is first activated by ATP to form Ala-AMP and then transferred to the acceptor end of tRNA(Ala). Also edits incorrectly charged Ser-tRNA(Ala) and Gly-tRNA(Ala) via its editing domain. The polypeptide is Alanine--tRNA ligase (Yersinia pseudotuberculosis serotype O:1b (strain IP 31758)).